A 226-amino-acid polypeptide reads, in one-letter code: 2-C-methyl-D-erythritol 4-phosphate cytidylyltransferase (226 aa).

Belongs to the IspD/TarI cytidylyltransferase family. IspD subfamily.

It carries out the reaction 2-C-methyl-D-erythritol 4-phosphate + CTP + H(+) = 4-CDP-2-C-methyl-D-erythritol + diphosphate. The protein operates within isoprenoid biosynthesis; isopentenyl diphosphate biosynthesis via DXP pathway; isopentenyl diphosphate from 1-deoxy-D-xylulose 5-phosphate: step 2/6. Catalyzes the formation of 4-diphosphocytidyl-2-C-methyl-D-erythritol from CTP and 2-C-methyl-D-erythritol 4-phosphate (MEP). The polypeptide is 2-C-methyl-D-erythritol 4-phosphate cytidylyltransferase (Clostridium beijerinckii (strain ATCC 51743 / NCIMB 8052) (Clostridium acetobutylicum)).